A 292-amino-acid polypeptide reads, in one-letter code: UTP--glucose-1-phosphate uridylyltransferase (292 aa).

It belongs to the UDPGP type 2 family. In terms of assembly, interacts with FloT.

It is found in the cell membrane. It localises to the membrane raft. The catalysed reaction is alpha-D-glucose 1-phosphate + UTP + H(+) = UDP-alpha-D-glucose + diphosphate. The protein operates within glycolipid metabolism; diglucosyl-diacylglycerol biosynthesis. Catalyzes the formation of UDP-glucose from glucose-1-phosphate and UTP. This is an intermediate step in the biosynthesis of diglucosyl-diacylglycerol (Glc2-DAG), i.e. the predominant glycolipid found in B.subtilis membrane, which is also used as a membrane anchor for lipoteichoic acid (LTA). Has a role in the biosynthesis of all phosphate-containing envelope polymers, since UDP-glucose serves as a glucosyl donor not only for the biosynthesis of LTA but also for wall teichoic acids (WTAs). Is required for biofilm formation. This is likely due to another role of UDP-glucose, which might also act as a metabolic signal regulating biofilm formation or may be involved in some unknown biosynthetic pathway essential for biofilm formation, e.g. the synthesis of an exopolysaccharide. The protein is UTP--glucose-1-phosphate uridylyltransferase (gtaB) of Bacillus subtilis (strain 168).